The following is a 454-amino-acid chain: Maintenance of mitochondrial morphology protein 1 (454 aa).

Residues 1–128 (MSMVIGIGDL…QSSGWGFAHG (128 aa)) are Lumenal-facing. Residues 129–149 (LLVGQLSVVAVLAFFIKFFIF) traverse the membrane as a helical segment. Residues 150–454 (GNSSMARPLM…SESETAVDSN (305 aa)) are Cytoplasmic-facing. One can recognise an SMP-LTD domain in the interval 207 to 430 (QSESLDWFNV…EPRFQLIELP (224 aa)).

This sequence belongs to the MMM1 family. In terms of assembly, homodimer. Component of the ER-mitochondria encounter structure (ERMES) or MDM complex, composed of MMM1, MDM10, MDM12 and MDM34. An MMM1 homodimer associates with one molecule of MDM12 on each side in a pairwise head-to-tail manner, and the SMP-LTD domains of MMM1 and MDM12 generate a continuous hydrophobic tunnel for phospholipid trafficking.

The protein resides in the endoplasmic reticulum membrane. Its function is as follows. Component of the ERMES/MDM complex, which serves as a molecular tether to connect the endoplasmic reticulum (ER) and mitochondria. Components of this complex are involved in the control of mitochondrial shape and protein biogenesis, and function in nonvesicular lipid trafficking between the ER and mitochondria. The MDM12-MMM1 subcomplex functions in the major beta-barrel assembly pathway that is responsible for biogenesis of all outer membrane beta-barrel proteins, and acts in a late step after the SAM complex. The MDM10-MDM12-MMM1 subcomplex further acts in the TOM40-specific pathway after the action of the MDM12-MMM1 complex. Essential for establishing and maintaining the structure of mitochondria and maintenance of mtDNA nucleoids. This is Maintenance of mitochondrial morphology protein 1 from Komagataella phaffii (strain GS115 / ATCC 20864) (Yeast).